The following is a 1847-amino-acid chain: Peripheral-type benzodiazepine receptor-associated protein 1 (1847 aa).

3 disordered regions span residues 57–81 (EESSEPAGAHSPGPIRNTDPEGTET), 282–318 (NQREPLRPARSQGSTAPSSVGAPAPGAPGETVLEDDV), and 560–626 (SGPK…DTAS). Composition is skewed to low complexity over residues 294-310 (GSTAPSSVGAPAPGAPG) and 600-613 (SLSNSSRSESIHNS). The SH3 1 domain occupies 651–718 (ARIQVFLARY…PSNFVERVSD (68 aa)). The interval 728-787 (ELADSSHSSGPELSFLSGGGGGCSSGGQSSGGRSQPRPEEEATGDELSLSPPPEGLGEPL) is disordered. A compositionally biased stretch (gly residues) spans 744–757 (SGGGGGCSSGGQSS). Fibronectin type-III domains are found at residues 789–880 (VPYP…AGAG), 882–974 (VPSQ…TLPA), and 979–1077 (APLD…PALA). Disordered regions lie at residues 1107 to 1174 (LGYT…EGPD), 1191 to 1215 (DAGPTPCSTQEELTQKEPSTEVCHR), 1240 to 1307 (NSLV…ILEQ), 1322 to 1478 (FSIP…ESSL), and 1514 to 1616 (PTDG…SHQD). The span at 1122–1133 (TQDSPASLSTEM) shows a compositional bias: polar residues. Positions 1203 to 1215 (LTQKEPSTEVCHR) are enriched in basic and acidic residues. Over residues 1253 to 1266 (DIQEEEEEEEEEEE) the composition is skewed to acidic residues. Residues 1272-1284 (WSFQKQVAGNSIG) show a composition bias toward polar residues. 2 stretches are compositionally biased toward acidic residues: residues 1296–1305 (CETDSDEEIL) and 1325–1335 (PEEEEEEDEEE). Positions 1340 to 1352 (PGPSSSSQDPSQP) are enriched in low complexity. 2 stretches are compositionally biased toward basic and acidic residues: residues 1412–1421 (RPQDPREHCS) and 1546–1578 (AWEKGEPERRGRSAIGRTKEPPSRATETGESRG). The region spanning 1617 to 1685 (LPLRVFVALF…PCNMVAEVAV (69 aa)) is the SH3 2 domain. Disordered regions lie at residues 1701-1747 (PPNV…PGPP) and 1818-1847 (LEGPGPEAGGLDSGTSQAESQRTRRRRVQC). The SH3 3 domain occupies 1756-1823 (KTSRPMVAAF…PSNFLEGPGP (68 aa)).

This sequence belongs to the RIMBP family. In terms of assembly, interacts with RIMS1 and RIMS2. Interacts with TSPO. Interacts with CACNA1A. As to expression, specifically expressed in brain. High expression level in the limbic system such as the nucleus accumbens, septum, and hippocampus, as well as on the cerebellum and pineal gland. Abundant in the CA1 region of the hippocampus.

It localises to the cytoplasm. The protein localises to the mitochondrion. Required for synaptic transmission regulation. It probably controls the recruitement of voltage-gated calcium channels to the presynaptic membrane, and modulates neurotransmitter release. In Rattus norvegicus (Rat), this protein is Peripheral-type benzodiazepine receptor-associated protein 1.